A 417-amino-acid polypeptide reads, in one-letter code: MATSLGSNTYNRQNWEDADFPILCQTCLGENPYIRMTKEKYGKECKICARPFTVFRWCPGVRMRFKKTEVCQTCSKLKNVCQTCLLDLEYGLPIQVRDTGVSLKDEMPRSDVNKEYYTQNMEREIANSDGTRPVGALGKATSSSDMLLKLARTTPYYKRNRPHICSFWVKGECKRGEECPYRHEKPTDPDDPLADQNIKDRFYGINDPVADKLLKRASTMPRLDPPEDKSITTLYVGGLGDTISESELRNHFYQFGEIRTITVVQRQQCAFIQFATRQSAETAAEKSFNKLIVNGRRLNVKWGRSQAARGKEREHDGSGDPGMKFEPVPGLPGALPPPPTEEESSANYFNLPPNGSAALVNISLPPPPGLSGPPPGFGPHMFPPMAPPPFLRAPGHIHYPSQDPQRMGAHAGKPSSG.

The C3H1-type zinc finger occupies 159 to 186 (RNRPHICSFWVKGECKRGEECPYRHEKP). The RRM domain occupies 232–305 (TTLYVGGLGD…RRLNVKWGRS (74 aa)). Disordered stretches follow at residues 303–348 (GRSQ…SANY) and 369–417 (GLSG…PSSG). Residues 309 to 318 (RGKEREHDGS) show a composition bias toward basic and acidic residues. Residues 369 to 391 (GLSGPPPGFGPHMFPPMAPPPFL) show a composition bias toward pro residues.

This sequence belongs to the SLT11 family. Component of the pre-catalytic and catalytic spliceosome complexes. Component of the postcatalytic spliceosome P complex.

The protein resides in the nucleus. Its subcellular location is the cytoplasm. Required for pre-mRNA splicing as component of the activated spliceosome. Involved in the first step of pre-mRNA splicing. Binds directly to the internal stem-loop (ISL) domain of the U6 snRNA and to the pre-mRNA intron near the 5' splice site during the activation and catalytic phases of the spliceosome cycle. In Xenopus laevis (African clawed frog), this protein is Pre-mRNA-splicing factor RBM22 (rbm22).